The primary structure comprises 445 residues: 3-phosphoshikimate 1-carboxyvinyltransferase (445 aa).

Residues Lys-21, Ser-22, and Arg-26 each coordinate 3-phosphoshikimate. Residue Lys-21 participates in phosphoenolpyruvate binding. Gly-92 and Arg-120 together coordinate phosphoenolpyruvate. Residues Ser-165, Gln-166, Asp-307, and Lys-334 each contribute to the 3-phosphoshikimate site. Gln-166 is a phosphoenolpyruvate binding site. Asp-307 serves as the catalytic Proton acceptor. The phosphoenolpyruvate site is built by Arg-338, Arg-379, and Lys-405.

Belongs to the EPSP synthase family. As to quaternary structure, monomer.

It localises to the cytoplasm. It catalyses the reaction 3-phosphoshikimate + phosphoenolpyruvate = 5-O-(1-carboxyvinyl)-3-phosphoshikimate + phosphate. Its pathway is metabolic intermediate biosynthesis; chorismate biosynthesis; chorismate from D-erythrose 4-phosphate and phosphoenolpyruvate: step 6/7. Its function is as follows. Catalyzes the transfer of the enolpyruvyl moiety of phosphoenolpyruvate (PEP) to the 5-hydroxyl of shikimate-3-phosphate (S3P) to produce enolpyruvyl shikimate-3-phosphate and inorganic phosphate. The polypeptide is 3-phosphoshikimate 1-carboxyvinyltransferase (Chlamydia pneumoniae (Chlamydophila pneumoniae)).